The sequence spans 122 residues: Large ribosomal subunit protein uL18 (122 aa).

Belongs to the universal ribosomal protein uL18 family. As to quaternary structure, part of the 50S ribosomal subunit; part of the 5S rRNA/L5/L18/L25 subcomplex. Contacts the 5S and 23S rRNAs.

In terms of biological role, this is one of the proteins that bind and probably mediate the attachment of the 5S RNA into the large ribosomal subunit, where it forms part of the central protuberance. This Dictyoglomus thermophilum (strain ATCC 35947 / DSM 3960 / H-6-12) protein is Large ribosomal subunit protein uL18.